The following is a 529-amino-acid chain: DEP domain-containing protein 1B (529 aa).

The 85-residue stretch at 24–108 folds into the DEP domain; it reads FRAGMPLRKH…DDGHLYRFPP (85 aa). The 202-residue stretch at 192–393 folds into the Rho-GAP domain; the sequence is ARLQKVLGLD…FLMDNYQEIL (202 aa).

This is DEP domain-containing protein 1B (DEPDC1B) from Gallus gallus (Chicken).